An 871-amino-acid chain; its full sequence is Alanine--tRNA ligase (871 aa).

Zn(2+) contacts are provided by H559, H563, C661, and H665.

The protein belongs to the class-II aminoacyl-tRNA synthetase family. Zn(2+) is required as a cofactor.

The protein resides in the cytoplasm. The catalysed reaction is tRNA(Ala) + L-alanine + ATP = L-alanyl-tRNA(Ala) + AMP + diphosphate. Functionally, catalyzes the attachment of alanine to tRNA(Ala) in a two-step reaction: alanine is first activated by ATP to form Ala-AMP and then transferred to the acceptor end of tRNA(Ala). Also edits incorrectly charged Ser-tRNA(Ala) and Gly-tRNA(Ala) via its editing domain. This chain is Alanine--tRNA ligase, found in Aquifex pyrophilus.